A 422-amino-acid polypeptide reads, in one-letter code: Lipase member M (422 aa).

Positions 1–33 (MSEILSRVWTVSHRVEIWLLILVAYLLQRNVNS) are cleaved as a signal peptide. An N-linked (GlcNAc...) asparagine glycan is attached at Asn48. Residues 92–392 (PVVLLQHGLL…EWAHVDFIWG (301 aa)) form the AB hydrolase-1 domain. Ser186 serves as the catalytic Nucleophile. Cys260 and Cys269 form a disulfide bridge. Catalysis depends on charge relay system residues Asp357 and His386.

The protein belongs to the AB hydrolase superfamily. Lipase family.

The protein resides in the secreted. Its function is as follows. Plays a highly specific role in the last step of keratinocyte differentiation. May have an essential function in lipid metabolism of the most differentiated epidermal layers. The sequence is that of Lipase member M (Lipm) from Mus musculus (Mouse).